A 445-amino-acid chain; its full sequence is GTPase Obg (445 aa).

One can recognise an Obg domain in the interval 7-164 (PEFVDCVTVE…RKLRLEVKSI (158 aa)). Residues 165-342 (ADVALVGFPS…FTLRLGEICQ (178 aa)) enclose the OBG-type G domain. GTP contacts are provided by residues 171–178 (GFPSVGKS), 196–200 (FTTLH), 217–220 (DVPG), 291–294 (NKID), and 323–325 (SAV). Residues Ser178 and Thr198 each coordinate Mg(2+). Residues 357 to 434 (IPAKNTPEFS…IGGVIFTWDP (78 aa)) enclose the OCT domain.

The protein belongs to the TRAFAC class OBG-HflX-like GTPase superfamily. OBG GTPase family. Monomer. Mg(2+) is required as a cofactor.

It localises to the cytoplasm. An essential GTPase which binds GTP, GDP and possibly (p)ppGpp with moderate affinity, with high nucleotide exchange rates and a fairly low GTP hydrolysis rate. Plays a role in control of the cell cycle, stress response, ribosome biogenesis and in those bacteria that undergo differentiation, in morphogenesis control. In Tropheryma whipplei (strain Twist) (Whipple's bacillus), this protein is GTPase Obg.